We begin with the raw amino-acid sequence, 127 residues long: Fatty acid-binding protein, liver-type (127 aa).

It belongs to the calycin superfamily. Fatty-acid binding protein (FABP) family.

The protein localises to the cytoplasm. The polypeptide is Fatty acid-binding protein, liver-type (fabp1) (Epinephelus coioides (Orange-spotted grouper)).